Reading from the N-terminus, the 415-residue chain is Gamma-glutamyl phosphate reductase (415 aa).

Belongs to the gamma-glutamyl phosphate reductase family.

The protein localises to the cytoplasm. The catalysed reaction is L-glutamate 5-semialdehyde + phosphate + NADP(+) = L-glutamyl 5-phosphate + NADPH + H(+). It functions in the pathway amino-acid biosynthesis; L-proline biosynthesis; L-glutamate 5-semialdehyde from L-glutamate: step 2/2. Its function is as follows. Catalyzes the NADPH-dependent reduction of L-glutamate 5-phosphate into L-glutamate 5-semialdehyde and phosphate. The product spontaneously undergoes cyclization to form 1-pyrroline-5-carboxylate. The chain is Gamma-glutamyl phosphate reductase from Listeria monocytogenes serotype 4b (strain F2365).